The chain runs to 278 residues: MAKEVWRFIDSGYCPPAFNMALDEALLDWHSEGKIPPTVRFYGWNPPTLSIGYFQKVEKEIDLEAVKRHGLGFVRRPTGGRGVLHDKELTYSVIVSESHPAMPKTVTEAYRVISQGILEGFRYLGLDAYFAVPKTEEEKADLRSPRSAVCFDAPSWYELVVEGRKIAGSAQTRQKGVILQHGSILLDLDEELLFSLFKYPNERVKERLQRDFKKKAVAINELTSRTVTIEEAKEAFYKGFEKGLNIVLEPYTLTAEERAYVEELARAKYESDEWNFKR.

Residues 33 to 248 form the BPL/LPL catalytic domain; sequence GKIPPTVRFY…GFEKGLNIVL (216 aa). Residue cysteine 150 is the Acyl-thioester intermediate of the active site.

Belongs to the octanoyltransferase LipM family. Monomer.

The catalysed reaction is octanoyl-[ACP] + L-lysyl-[protein] = N(6)-octanoyl-L-lysyl-[protein] + holo-[ACP] + H(+). Its pathway is protein modification; protein lipoylation via endogenous pathway; protein N(6)-(lipoyl)lysine from octanoyl-[acyl-carrier-protein]. Functionally, catalyzes the transfer of endogenously produced octanoic acid from octanoyl-acyl-carrier-protein onto the lipoyl domain of GcvH, an intermediate carrier during protein lipoylation. The sequence is that of Octanoyltransferase LipM from Geobacillus kaustophilus (strain HTA426).